The sequence spans 264 residues: uncharacterized protein (264 aa).

Positions 5, 7, 93, 134, 158, and 208 each coordinate a divalent metal cation.

Belongs to the metallo-dependent hydrolases superfamily. TatD-type hydrolase family. It depends on a divalent metal cation as a cofactor.

This is an uncharacterized protein from Mycobacterium tuberculosis (strain ATCC 25618 / H37Rv).